The sequence spans 358 residues: C-X-C chemokine receptor type 4-A (358 aa).

Residues 1 to 25 are important for chemokine binding and signaling; that stretch reads MDGFSGGIDINIFDGNSTENGSGDF. The Extracellular portion of the chain corresponds to 1–44; the sequence is MDGFSGGIDINIFDGNSTENGSGDFEDFIEPCFMHENSDFNRIF. N-linked (GlcNAc...) asparagine glycosylation is found at Asn16 and Asn20. 2 disulfides stabilise this stretch: Cys32-Cys281 and Cys113-Cys190. The helical transmembrane segment at 45 to 67 threads the bilayer; that stretch reads LPTIYSFIFLLGIIGNGLVVVVM. The Cytoplasmic segment spans residues 68-81; sequence GYQKKSRTMTDKYR. Residues 82–103 form a helical membrane-spanning segment; it reads LHLSVADLLFVFTLPFWSVDAA. Residues 98-101 form a chemokine binding region; sequence WSVD. Residues 104-114 lie on the Extracellular side of the membrane; that stretch reads IGWYFKEFLCK. Residues 115–134 form a helical membrane-spanning segment; the sequence is AVHVIYTVNLYSSVLILAFI. The chemokine binding stretch occupies residues 117–121; it reads HVIYT. At 135 to 158 the chain is on the cytoplasmic side; sequence SLDRYLAIVHATNSQGSRKMLADK. The involved in dimerization; when bound to chemokine stretch occupies residues 139-151; sequence YLAIVHATNSQGS. The helical transmembrane segment at 159–178 threads the bilayer; it reads VVYAGVWLPALLLTVPDLVF. Residues 179 to 202 lie on the Extracellular side of the membrane; that stretch reads ARVSDENGQFVCDRIYPIENRETW. The interval 190 to 194 is chemokine binding, important for signaling; sequence CDRIY. A helical transmembrane segment spans residues 203–223; the sequence is TVGFRFLHITVGLILPGLIIL. Residues 224 to 248 lie on the Cytoplasmic side of the membrane; sequence ICYCVIISKLSHSKGHQKRKALKTT. Residues 249–268 form a helical membrane-spanning segment; it reads VILILAFFACWLPYYVCLTT. Topologically, residues 269-289 are extracellular; it reads DTFMLLGLVKGDCIWENTLHM. The chain crosses the membrane as a helical span at residues 290 to 309; it reads AISITEALAFFHCCLNPILY. The Cytoplasmic segment spans residues 310–358; sequence AFLGAKFKTSAQNAFTSVSRGSSLKILSKKRAGLSSVSTESESSSFHSS. Residues 338 to 358 are disordered; that stretch reads KKRAGLSSVSTESESSSFHSS. The span at 344 to 358 shows a compositional bias: low complexity; sequence SSVSTESESSSFHSS.

This sequence belongs to the G-protein coupled receptor 1 family. In terms of assembly, monomer. Can form dimers. In terms of processing, sulfation is required for efficient binding of cxcl12/sdf-1alpha and promotes its dimerization. Post-translationally, O- and N-glycosylated. As to expression, highly expressed in the embryonic nervous system including forebrain, hindbrain and sensory organs (including eye), and in neural crest cells. Also expressed in the dorsal lateral plate, the first site of definitive hematopoiesis in the embryo. Appears in migrating presumptive primordial germ cells (pPGCs) from stage 24. Expressed in the epidermis at stage 40. In the adult, highly expressed in the spleen with lower levels of expression in the liver and very low levels in kidney, heart, skin and brain.

It localises to the cell membrane. Its subcellular location is the cytoplasm. The protein resides in the nucleus. It is found in the early endosome. The protein localises to the late endosome. It localises to the lysosome. In terms of biological role, receptor for the C-X-C chemokine cxcl12/sdf-1. Transduces a signal by increasing the intracellular level of calcium ions. Signaling with cxcl12/sdf-1 mediates the directional movement of mesodermal cells during gastrulation. May play a role in the migration of embryonic presumptive primordial germ cells (pPGCs). May also be involved in regulating the migration of hematopoietic stem cells into the larval liver. This chain is C-X-C chemokine receptor type 4-A (cxcr4-a), found in Xenopus laevis (African clawed frog).